Here is an 87-residue protein sequence, read N- to C-terminus: Large ribosomal subunit protein bL27 (87 aa).

A disordered region spans residues 1–21 (MAHKKAGGSSRNGRDSESKRL).

This sequence belongs to the bacterial ribosomal protein bL27 family.

The polypeptide is Large ribosomal subunit protein bL27 (Paraburkholderia xenovorans (strain LB400)).